We begin with the raw amino-acid sequence, 89 residues long: Large ribosomal subunit protein bL28 (89 aa).

Belongs to the bacterial ribosomal protein bL28 family.

This is Large ribosomal subunit protein bL28 from Chlamydia trachomatis serovar A (strain ATCC VR-571B / DSM 19440 / HAR-13).